Here is a 199-residue protein sequence, read N- to C-terminus: Recombination protein RecR (199 aa).

The segment at 58 to 73 adopts a C4-type zinc-finger fold; sequence CSVCYNLSETELCRIC. A Toprim domain is found at 81–176; sequence TRLCVVEQPR…EITRLARGIT (96 aa).

Belongs to the RecR family.

May play a role in DNA repair. It seems to be involved in an RecBC-independent recombinational process of DNA repair. It may act with RecF and RecO. The protein is Recombination protein RecR of Rhodopirellula baltica (strain DSM 10527 / NCIMB 13988 / SH1).